The sequence spans 1399 residues: DNA-directed RNA polymerase subunit beta' (1399 aa).

Zn(2+) is bound by residues C70, C72, C85, and C88. Mg(2+) is bound by residues D460, D462, and D464. 4 residues coordinate Zn(2+): C814, C888, C895, and C898.

Belongs to the RNA polymerase beta' chain family. As to quaternary structure, the RNAP catalytic core consists of 2 alpha, 1 beta, 1 beta' and 1 omega subunit. When a sigma factor is associated with the core the holoenzyme is formed, which can initiate transcription. Mg(2+) is required as a cofactor. It depends on Zn(2+) as a cofactor.

It carries out the reaction RNA(n) + a ribonucleoside 5'-triphosphate = RNA(n+1) + diphosphate. Its function is as follows. DNA-dependent RNA polymerase catalyzes the transcription of DNA into RNA using the four ribonucleoside triphosphates as substrates. The polypeptide is DNA-directed RNA polymerase subunit beta' (Pseudomonas syringae pv. syringae (strain B728a)).